Reading from the N-terminus, the 213-residue chain is Small ribosomal subunit protein uS5 (213 aa).

The tract at residues 1 to 41 (MSGRERNGGRSAENNDKKERNERNGRNDRGGRNDRRNQQDE) is disordered. Residues 45–108 (FIERVVTINR…EEARKNFFRV (64 aa)) enclose the S5 DRBM domain.

This sequence belongs to the universal ribosomal protein uS5 family. Part of the 30S ribosomal subunit. Contacts proteins S4 and S8.

In terms of biological role, with S4 and S12 plays an important role in translational accuracy. Functionally, located at the back of the 30S subunit body where it stabilizes the conformation of the head with respect to the body. The protein is Small ribosomal subunit protein uS5 of Corynebacterium jeikeium (strain K411).